We begin with the raw amino-acid sequence, 231 residues long: Cytochrome c oxidase subunit 2 (231 aa).

Residues 1–14 (MAHPAQLGLQNATS) are Mitochondrial intermembrane-facing. A helical transmembrane segment spans residues 15-45 (PIMEELIAFHDHALMIIFLISSLVLYIISLM). The Mitochondrial matrix portion of the chain corresponds to 46-59 (LTTKLTHTSTMNAQ). A helical membrane pass occupies residues 60–87 (EIEMVWTILPAIILIMIALPSLRILYMT). At 88–231 (DEFNKPYLTL…WASYLYIVSL (144 aa)) the chain is on the mitochondrial intermembrane side. Cu cation-binding residues include H161, C196, E198, C200, H204, and M207. A Mg(2+)-binding site is contributed by E198.

The protein belongs to the cytochrome c oxidase subunit 2 family. Component of the cytochrome c oxidase (complex IV, CIV), a multisubunit enzyme composed of 14 subunits. The complex is composed of a catalytic core of 3 subunits MT-CO1, MT-CO2 and MT-CO3, encoded in the mitochondrial DNA, and 11 supernumerary subunits COX4I, COX5A, COX5B, COX6A, COX6B, COX6C, COX7A, COX7B, COX7C, COX8 and NDUFA4, which are encoded in the nuclear genome. The complex exists as a monomer or a dimer and forms supercomplexes (SCs) in the inner mitochondrial membrane with NADH-ubiquinone oxidoreductase (complex I, CI) and ubiquinol-cytochrome c oxidoreductase (cytochrome b-c1 complex, complex III, CIII), resulting in different assemblies (supercomplex SCI(1)III(2)IV(1) and megacomplex MCI(2)III(2)IV(2)). Found in a complex with TMEM177, COA6, COX18, COX20, SCO1 and SCO2. Interacts with TMEM177 in a COX20-dependent manner. Interacts with COX20. Interacts with COX16. It depends on Cu cation as a cofactor.

Its subcellular location is the mitochondrion inner membrane. It carries out the reaction 4 Fe(II)-[cytochrome c] + O2 + 8 H(+)(in) = 4 Fe(III)-[cytochrome c] + 2 H2O + 4 H(+)(out). In terms of biological role, component of the cytochrome c oxidase, the last enzyme in the mitochondrial electron transport chain which drives oxidative phosphorylation. The respiratory chain contains 3 multisubunit complexes succinate dehydrogenase (complex II, CII), ubiquinol-cytochrome c oxidoreductase (cytochrome b-c1 complex, complex III, CIII) and cytochrome c oxidase (complex IV, CIV), that cooperate to transfer electrons derived from NADH and succinate to molecular oxygen, creating an electrochemical gradient over the inner membrane that drives transmembrane transport and the ATP synthase. Cytochrome c oxidase is the component of the respiratory chain that catalyzes the reduction of oxygen to water. Electrons originating from reduced cytochrome c in the intermembrane space (IMS) are transferred via the dinuclear copper A center (CU(A)) of subunit 2 and heme A of subunit 1 to the active site in subunit 1, a binuclear center (BNC) formed by heme A3 and copper B (CU(B)). The BNC reduces molecular oxygen to 2 water molecules using 4 electrons from cytochrome c in the IMS and 4 protons from the mitochondrial matrix. This chain is Cytochrome c oxidase subunit 2 (MT-CO2), found in Lagothrix lagotricha (Brown woolly monkey).